The primary structure comprises 169 residues: Group 2 truncated hemoglobin 3-2 (169 aa).

His99 lines the heme b pocket.

This sequence belongs to the truncated hemoglobin family. Group II subfamily. Homodimer when ferric.

Functionally, hemoglobin-like protein that exhibits an unusual concentration-independent binding of O(2) and CO. Required for general plant development and during nodulation. May promote shoot organogenesis from root explants. The sequence is that of Group 2 truncated hemoglobin 3-2 from Medicago truncatula (Barrel medic).